The primary structure comprises 365 residues: Putative clathrin assembly protein At4g40080 (365 aa).

The region spanning 29–167 (NTKSKTLSFH…STSRIMGFFI (139 aa)) is the ENTH domain.

The protein resides in the membrane. It localises to the clathrin-coated pit. It is found in the golgi apparatus. Its subcellular location is the cytoplasmic vesicle. The protein localises to the clathrin-coated vesicle. In Arabidopsis thaliana (Mouse-ear cress), this protein is Putative clathrin assembly protein At4g40080.